Consider the following 513-residue polypeptide: ATP synthase subunit alpha (513 aa).

Residue 169-176 participates in ATP binding; that stretch reads GDRQTGKT.

Belongs to the ATPase alpha/beta chains family. F-type ATPases have 2 components, CF(1) - the catalytic core - and CF(0) - the membrane proton channel. CF(1) has five subunits: alpha(3), beta(3), gamma(1), delta(1), epsilon(1). CF(0) has three main subunits: a(1), b(2) and c(9-12). The alpha and beta chains form an alternating ring which encloses part of the gamma chain. CF(1) is attached to CF(0) by a central stalk formed by the gamma and epsilon chains, while a peripheral stalk is formed by the delta and b chains.

It localises to the cell inner membrane. The catalysed reaction is ATP + H2O + 4 H(+)(in) = ADP + phosphate + 5 H(+)(out). Functionally, produces ATP from ADP in the presence of a proton gradient across the membrane. The alpha chain is a regulatory subunit. This is ATP synthase subunit alpha from Shewanella amazonensis (strain ATCC BAA-1098 / SB2B).